Reading from the N-terminus, the 168-residue chain is 6,7-dimethyl-8-ribityllumazine synthase (168 aa).

Residues Phe-24, 58-60, and 82-84 each bind 5-amino-6-(D-ribitylamino)uracil; these read ALE and AVI. Residue 87 to 88 coordinates (2S)-2-hydroxy-3-oxobutyl phosphate; the sequence is ET. The active-site Proton donor is His-90. Position 115 (Asn-115) interacts with 5-amino-6-(D-ribitylamino)uracil. Position 129 (Arg-129) interacts with (2S)-2-hydroxy-3-oxobutyl phosphate.

The protein belongs to the DMRL synthase family.

The catalysed reaction is (2S)-2-hydroxy-3-oxobutyl phosphate + 5-amino-6-(D-ribitylamino)uracil = 6,7-dimethyl-8-(1-D-ribityl)lumazine + phosphate + 2 H2O + H(+). It functions in the pathway cofactor biosynthesis; riboflavin biosynthesis; riboflavin from 2-hydroxy-3-oxobutyl phosphate and 5-amino-6-(D-ribitylamino)uracil: step 1/2. Functionally, catalyzes the formation of 6,7-dimethyl-8-ribityllumazine by condensation of 5-amino-6-(D-ribitylamino)uracil with 3,4-dihydroxy-2-butanone 4-phosphate. This is the penultimate step in the biosynthesis of riboflavin. The sequence is that of 6,7-dimethyl-8-ribityllumazine synthase from Paraburkholderia xenovorans (strain LB400).